The sequence spans 40 residues: Natriuretic peptide PpNP-b (40 aa).

Residues 1 to 8 (SGSKTANI) constitute a propeptide that is removed on maturation. Cys12 and Cys28 form a disulfide bridge. The tract at residues 20–40 (IGTTSGMGCGRPRPKPTPGGS) is disordered.

Belongs to the natriuretic peptide family. Expressed by the venom gland.

It is found in the secreted. Its function is as follows. Snake venom natriuretic peptide that targets both NPR1 and NPR2. Exhibits hypotensive and vasodepressor activities. This chain is Natriuretic peptide PpNP-b, found in Pseudechis porphyriacus (Red-bellied black snake).